Consider the following 363-residue polypeptide: Adenosine deaminase (363 aa).

Zn(2+) contacts are provided by H42 and H44. A purine D-ribonucleoside contacts are provided by residues 44–46, D172, and G201; that span reads HLD. A gating helix loop; regulates binding affinity for substrates and thus substrate selectivity region spans residues 170 to 184; that stretch reads IGDTGHEAANIKASA. Residue H226 coordinates Zn(2+). The a purine D-ribonucleoside site is built by E229, H253, and D310. D310 is a Zn(2+) binding site.

Belongs to the metallo-dependent hydrolases superfamily. Adenosine and AMP deaminases family. Requires Zn(2+) as cofactor.

The enzyme catalyses adenosine + H2O + H(+) = inosine + NH4(+). The catalysed reaction is S-methyl-5'-thioadenosine + H2O + H(+) = S-methyl-5'-thioinosine + NH4(+). The protein operates within purine metabolism; purine nucleoside salvage. With respect to regulation, inhibited by coformycin and methylthiocoformycin (MT-coformycin). Its function is as follows. Catalyzes the hydrolytic deamination of adenosine to produce inosine. Unlike mammalian adenosine deaminases, also catalyzes the deamination of 5'-methylthioadenosine (MTA), a by-product of polyamine biosynthesis, to produce 5'-methylthioinosine (MTI). Plays an essential role in the purine salvage pathway which allows the parasite to use host cell purines for the synthesis of nucleic acids. This Plasmodium cynomolgi (strain B) protein is Adenosine deaminase.